We begin with the raw amino-acid sequence, 186 residues long: ATP synthase subunit b (186 aa).

Residues 28 to 48 (IVWSIIPFAVILFVFWKFVLP) form a helical membrane-spanning segment.

The protein belongs to the ATPase B chain family. F-type ATPases have 2 components, F(1) - the catalytic core - and F(0) - the membrane proton channel. F(1) has five subunits: alpha(3), beta(3), gamma(1), delta(1), epsilon(1). F(0) has three main subunits: a(1), b(2) and c(10-14). The alpha and beta chains form an alternating ring which encloses part of the gamma chain. F(1) is attached to F(0) by a central stalk formed by the gamma and epsilon chains, while a peripheral stalk is formed by the delta and b chains.

It localises to the cell membrane. F(1)F(0) ATP synthase produces ATP from ADP in the presence of a proton or sodium gradient. F-type ATPases consist of two structural domains, F(1) containing the extramembraneous catalytic core and F(0) containing the membrane proton channel, linked together by a central stalk and a peripheral stalk. During catalysis, ATP synthesis in the catalytic domain of F(1) is coupled via a rotary mechanism of the central stalk subunits to proton translocation. In terms of biological role, component of the F(0) channel, it forms part of the peripheral stalk, linking F(1) to F(0). The polypeptide is ATP synthase subunit b (Corynebacterium jeikeium (strain K411)).